The primary structure comprises 206 residues: Small ribosomal subunit protein eS1 (206 aa).

The protein belongs to the eukaryotic ribosomal protein eS1 family.

This chain is Small ribosomal subunit protein eS1, found in Halobacterium salinarum (strain ATCC 29341 / DSM 671 / R1).